A 490-amino-acid chain; its full sequence is COP9 signalosome complex subunit 2 (490 aa).

A compositionally biased stretch (acidic residues) spans 1 to 30 (MSDDDFMQDSDQEYDFEYEDDEEEDTGDVD). The tract at residues 1 to 32 (MSDDDFMQDSDQEYDFEYEDDEEEDTGDVDIE) is disordered. A PCI domain is found at 250 to 418 (SEENWKEAQS…GVLELESRED (169 aa)). Residues 469-490 (DTMRSMGSGKRGRRVGLTQRAY) form a disordered region.

The protein belongs to the CSN2 family. In terms of assembly, component of the COP9 signalosome (CSN) complex.

It localises to the cytoplasm. Its subcellular location is the nucleus. Component of the COP9 signalosome (CSN) complex that acts as an regulator of the ubiquitin (Ubl) conjugation pathway by mediating the deneddylation of the cullin subunit of SCF-type E3 ubiquitin-protein ligase complexes. The CSN complex is involved in the regulation of the circadian clock through its control of the stability of the SCF(FWD-1) complex. The sequence is that of COP9 signalosome complex subunit 2 (csn-2) from Neurospora crassa (strain ATCC 24698 / 74-OR23-1A / CBS 708.71 / DSM 1257 / FGSC 987).